The primary structure comprises 206 residues: Large ribosomal subunit protein bL25 (206 aa).

The tract at residues 1-91 (MEYRLKAYYR…RPEHVDFFVL (91 aa)) is bL25 domain. The CTC domain stretch occupies residues 92-206 (SDEPVEMYVP…IKKGKEEEEE (115 aa)). Positions 184–206 (AEEAAAEVAEPEVIKKGKEEEEE) are disordered. Over residues 195 to 206 (EVIKKGKEEEEE) the composition is skewed to basic and acidic residues.

It belongs to the bacterial ribosomal protein bL25 family. CTC subfamily. Part of the 50S ribosomal subunit. Contacts the 5S rRNA.

Its function is as follows. This is one of 3 proteins that mediate the attachment of the 5S rRNA onto the large ribosomal subunit. The protein is Large ribosomal subunit protein bL25 (rplY) of Thermus thermophilus.